The following is a 324-amino-acid chain: Concanavalin B (324 aa).

A signal peptide spans 1 to 25 (MGCERKALILMVVIWIMSFWTLSLA). The 282-residue stretch at 30-311 (TEIAVYWGQR…TNIIRYLNAT (282 aa)) folds into the GH18 domain. N-linked (GlcNAc...) asparagine glycosylation is present at asparagine 309.

The protein belongs to the glycosyl hydrolase 18 family.

Its function is as follows. May act as a carbohydrate-binding protein. In Canavalia ensiformis (Jack bean), this protein is Concanavalin B.